Here is a 141-residue protein sequence, read N- to C-terminus: Nucleoside diphosphate kinase (141 aa).

Residues Lys-11, Phe-59, Arg-87, Thr-93, Arg-104, and Asn-114 each coordinate ATP. The active-site Pros-phosphohistidine intermediate is His-117.

It belongs to the NDK family. As to quaternary structure, homotetramer. The cofactor is Mg(2+).

Its subcellular location is the cytoplasm. It carries out the reaction a 2'-deoxyribonucleoside 5'-diphosphate + ATP = a 2'-deoxyribonucleoside 5'-triphosphate + ADP. The enzyme catalyses a ribonucleoside 5'-diphosphate + ATP = a ribonucleoside 5'-triphosphate + ADP. Its function is as follows. Major role in the synthesis of nucleoside triphosphates other than ATP. The ATP gamma phosphate is transferred to the NDP beta phosphate via a ping-pong mechanism, using a phosphorylated active-site intermediate. This is Nucleoside diphosphate kinase from Neisseria gonorrhoeae (strain NCCP11945).